We begin with the raw amino-acid sequence, 178 residues long: Large ribosomal subunit protein uL6 (178 aa).

This sequence belongs to the universal ribosomal protein uL6 family. In terms of assembly, part of the 50S ribosomal subunit.

This protein binds to the 23S rRNA, and is important in its secondary structure. It is located near the subunit interface in the base of the L7/L12 stalk, and near the tRNA binding site of the peptidyltransferase center. In Staphylococcus aureus (strain Mu3 / ATCC 700698), this protein is Large ribosomal subunit protein uL6.